Consider the following 205-residue polypeptide: Protein Nef (205 aa).

A lipid anchor (N-myristoyl glycine; by host) is attached at Gly2. The residue at position 6 (Ser6) is a Phosphoserine; by host. The acidic; interacts with host PACS1 and PACS2; stabilizes the interaction of NEF/MHC-I with host AP1M1; necessary for MHC-I internalization stretch occupies residues 61-65 (EESEE). The interval 69 to 78 (PVRPQVPLRP) is SH3-binding; interaction with Src family tyrosine kinases. The PxxP; stabilizes the interaction of NEF/MHC-I with host AP1M1; necessary for MHC-I internalization signature appears at 72 to 75 (PQVP). The segment at 108–124 (EILDLWVYHTQGFFPDW) is mediates dimerization, Nef-PTE1 interaction. The segment at 148–180 (VDPREVEEANTGENNCLLHPMSQHGMDDDEREV) is binding to ATP6V1H. The short motif at 164–165 (LL) is the Dileucine internalization motif; necessary for CD4 internalization element. Positions 174 to 175 (DD) match the Diacidic; necessary for CD4 internalization motif.

This sequence belongs to the lentivirus primate group Nef protein family. In terms of assembly, monomer; cytosolic form. Homodimer; membrane bound form. Interacts with Nef associated p21-activated kinase (PAK2); this interaction activates PAK2. Associates with the Nef-MHC-I-AP1 complex; this complex is required for MHC-I internalization. Interacts (via C-terminus) with host PI3-kinase. Interacts with host PACS1; this interaction seems to be weak. Interacts with host PACS2. Interacts with host LCK and MAPK3; these interactions inhibit the kinase activity of the latter. Interacts with host ATP6V1H; this interaction may play a role in CD4 endocytosis. Associates with the CD4-Nef-AP2 complex; this complex is required for CD4 internalization. Interacts with host AP2 subunit alpha and AP2 subunit sigma2. Interacts with TCR-zeta chain; this interaction up-regulates the Fas ligand (FasL) surface expression. Interacts with host HCK, LYN, and SRC; these interactions activate the Src family kinases. Interacts with MAP3K5; this interaction inhibits the Fas and TNFR-mediated death signals. Interacts with beta-COP and PTE1. Interacts with human RACK1; this increases Nef phosphorylation by PKC. Interacts with TP53; this interaction decreases the half-life of TP53, protecting the infected cell against p53-mediated apoptosis. Post-translationally, the virion-associated Nef proteins are cleaved by the viral protease to release the soluble C-terminal core protein. Nef is probably cleaved concomitantly with viral structural proteins on maturation of virus particles. Myristoylated. In terms of processing, phosphorylated on serine residues, probably by host PKCdelta and theta.

The protein localises to the host cell membrane. Its subcellular location is the virion. It is found in the secreted. The protein resides in the host Golgi apparatus membrane. Factor of infectivity and pathogenicity, required for optimal virus replication. Alters numerous pathways of T-lymphocyte function and down-regulates immunity surface molecules in order to evade host defense and increase viral infectivity. Alters the functionality of other immunity cells, like dendritic cells, monocytes/macrophages and NK cells. In terms of biological role, in infected CD4(+) T-lymphocytes, down-regulates the surface MHC-I, mature MHC-II, CD4, CD28, CCR5 and CXCR4 molecules. Mediates internalization and degradation of host CD4 through the interaction of with the cytoplasmic tail of CD4, the recruitment of AP-2 (clathrin adapter protein complex 2), internalization through clathrin coated pits, and subsequent transport to endosomes and lysosomes for degradation. Diverts host MHC-I molecules to the trans-Golgi network-associated endosomal compartments by an endocytic pathway to finally target them for degradation. MHC-I down-regulation may involve AP-1 (clathrin adapter protein complex 1) or possibly Src family kinase-ZAP70/Syk-PI3K cascade recruited by PACS2. In consequence infected cells are masked for immune recognition by cytotoxic T-lymphocytes. Decreasing the number of immune receptors also prevents reinfection by more HIV particles (superinfection). Down-regulates host SERINC3 and SERINC5 thereby excluding these proteins from the viral particles. Virion infectivity is drastically higher when SERINC3 or SERINC5 are excluded from the viral envelope, because these host antiviral proteins impair the membrane fusion event necessary for subsequent virion penetration. Functionally, bypasses host T-cell signaling by inducing a transcriptional program nearly identical to that of anti-CD3 cell activation. Interaction with TCR-zeta chain up-regulates the Fas ligand (FasL). Increasing surface FasL molecules and decreasing surface MHC-I molecules on infected CD4(+) cells send attacking cytotoxic CD8+ T-lymphocytes into apoptosis. Its function is as follows. Plays a role in optimizing the host cell environment for viral replication without causing cell death by apoptosis. Protects the infected cells from apoptosis in order to keep them alive until the next virus generation is ready to strike. Inhibits the Fas and TNFR-mediated death signals by blocking MAP3K5/ASK1. Decreases the half-life of TP53, protecting the infected cell against p53-mediated apoptosis. Inhibits the apoptotic signals regulated by the Bcl-2 family proteins through the formation of a Nef/PI3-kinase/PAK2 complex that leads to activation of PAK2 and induces phosphorylation of host BAD. Extracellular Nef protein targets CD4(+) T-lymphocytes for apoptosis by interacting with CXCR4 surface receptors. In Human immunodeficiency virus type 1 group M subtype A (isolate Z321) (HIV-1), this protein is Protein Nef.